The chain runs to 116 residues: Small ribosomal subunit protein uS13m (116 aa).

Residues 92 to 116 (HQDGSPLRGQRTHTNARTARKQIRK) form a disordered region.

It belongs to the universal ribosomal protein uS13 family. In terms of assembly, part of the small ribosomal subunit.

It is found in the mitochondrion. In terms of biological role, located at the top of the head of the small subunit, it contacts several helices of the 18S rRNA. This Triticum aestivum (Wheat) protein is Small ribosomal subunit protein uS13m (RPS13).